Here is a 565-residue protein sequence, read N- to C-terminus: MGGCYSAYASSRKLRGRISKISLVIPDPVPDAEAASPRKDGVDGDGDDVRGGGGGCDDGGDVVAIATTTADEFARRYVLGKELGRGEFGVTRRCSDAATGEALACKTIRKHRRLAPPRVTAAKAAAAHGEDVKREVAIMRRMSSASSSRGGGAASSAAVVRLREACEDAADGSVHLVMELCEGGELFDRIVARGHYSERAAANIFRTIVDVVQLCHSNGVIHRDLKPENFLFANKSEDSPLKVIDFGLSVFFKPGDRFTEVVGSAYYMAPEVLRRSYGPEVDVWSAGVILYILLCGVPPFWGDNDEKIAQAILRGAIDFNREPLPRVSANAKDLVRRMLDPNPSTRLTAKQVLEHPWLKNADTAPNVSLGDAVRARLQQFSAMNKFKKKALGVVARNLPGEEVDKYVQMFHHMDKDKNGHLSLDELLEGLHINGQPVPEPEIRMLLEAADTDGNGTLDCDEFVTVSVHLKKMSNDEYLAAAFNYFDKDGSGFIELDELREEVGPNEQAILEILRDVDTDKDGRISYQEFELMMKSGADWRNASRHFSRANFSTLSRRLCKDTLTP.

Glycine 2 carries N-myristoyl glycine lipidation. The disordered stretch occupies residues 28 to 55; sequence PVPDAEAASPRKDGVDGDGDDVRGGGGG. Positions 36–50 are enriched in basic and acidic residues; that stretch reads SPRKDGVDGDGDDVR. One can recognise a Protein kinase domain in the interval 77–358; it reads YVLGKELGRG…AKQVLEHPWL (282 aa). ATP contacts are provided by residues 83–91 and lysine 106; that span reads LGRGEFGVT. Catalysis depends on aspartate 224, which acts as the Proton acceptor. The tract at residues 364-394 is autoinhibitory domain; sequence APNVSLGDAVRARLQQFSAMNKFKKKALGVV. EF-hand domains are found at residues 401–436, 437–472, 473–500, and 504–539; these read EEVD…NGQP, VPEP…LKKM, SNDE…ELRE, and PNEQ…GADW. Ca(2+) is bound by residues aspartate 414, aspartate 416, asparagine 418, histidine 420, glutamate 425, aspartate 450, aspartate 452, asparagine 454, threonine 456, glutamate 461, aspartate 486, aspartate 488, serine 490, glutamate 497, aspartate 517, aspartate 519, aspartate 521, arginine 523, and glutamate 528.

The protein belongs to the protein kinase superfamily. Ser/Thr protein kinase family. CDPK subfamily. As to expression, expressed in spikelets and developing seeds.

Its subcellular location is the membrane. The catalysed reaction is L-seryl-[protein] + ATP = O-phospho-L-seryl-[protein] + ADP + H(+). The enzyme catalyses L-threonyl-[protein] + ATP = O-phospho-L-threonyl-[protein] + ADP + H(+). Its activity is regulated as follows. Activated by calcium. Autophosphorylation may play an important role in the regulation of the kinase activity. May play a role in signal transduction pathways that involve calcium as a second messenger. Functions in signal transduction pathways that positively regulate responses to abscisic acid (ABA) and salt stress. The polypeptide is Calcium-dependent protein kinase 21 (Oryza sativa subsp. japonica (Rice)).